Consider the following 324-residue polypeptide: tRNA dimethylallyltransferase (324 aa).

Residue 17-24 participates in ATP binding; it reads GPTASGKT. Position 19–24 (19–24) interacts with substrate; that stretch reads TASGKT. Interaction with substrate tRNA regions lie at residues 42-45, 166-170, 251-256, and 284-291; these read DSAL, QRIQR, RCVGYR, and KRQITWLR.

Belongs to the IPP transferase family. Monomer. Mg(2+) serves as cofactor.

It catalyses the reaction adenosine(37) in tRNA + dimethylallyl diphosphate = N(6)-dimethylallyladenosine(37) in tRNA + diphosphate. In terms of biological role, catalyzes the transfer of a dimethylallyl group onto the adenine at position 37 in tRNAs that read codons beginning with uridine, leading to the formation of N6-(dimethylallyl)adenosine (i(6)A). This Burkholderia ambifaria (strain MC40-6) protein is tRNA dimethylallyltransferase.